The primary structure comprises 512 residues: rRNA N(6)-adenosine-methyltransferase ZCCHC4 (512 aa).

Cysteine 39, histidine 41, cysteine 63, cysteine 72, cysteine 124, cysteine 127, histidine 139, and histidine 142 together coordinate Zn(2+). The GRF-type zinc-finger motif lies at 39 to 81; it reads CPHGPTLLFVKVNQGKEETRKFYACSACRDRKDCNFFQWEDEK. S-adenosyl-L-methionine-binding positions include 171-174, arginine 201, aspartate 223, 241-242, and aspartate 274; these read QYLF and NM. The interval 335–355 is regulatory loop; sequence QVDYDNHALYKHGKTGRKQSP. The Zn(2+) site is built by cysteine 378, cysteine 381, histidine 391, cysteine 392, cysteine 395, cysteine 398, histidine 408, cysteine 409, cysteine 412, cysteine 415, histidine 422, cysteine 423, cysteine 426, cysteine 429, histidine 434, and cysteine 436. A DHHC domain is found at 393-445; it reads VHCNSCTSKDGRKWSHCFLCKKCVKPSWIHCNTCNRCALPDHSCLGPKDGCFI. The CCHC-type zinc-finger motif lies at 441 to 458; that stretch reads DGCFICGALDHKRSNCPN.

It belongs to the ZCCHC4 family. In terms of assembly, interacts with components of the ASC-1 complex TRIP4, ASCC1, ASCC2 and ASCC3. Interact with AHCYL1 and AHCYL2. Interact with YTHDC2.

It is found in the cytoplasm. It localises to the nucleus. The protein localises to the nucleolus. It carries out the reaction adenosine(4220) in 28S rRNA + S-adenosyl-L-methionine = N(6)-methyladenosine(4220) in 28S rRNA + S-adenosyl-L-homocysteine + H(+). Its function is as follows. rRNA N6-methyltransferase that specifically methylates the adenine in position 4220 of 28S rRNA. N6-methylation of adenine(4220) in 28S rRNA is required for translation. The chain is rRNA N(6)-adenosine-methyltransferase ZCCHC4 from Mus musculus (Mouse).